A 743-amino-acid polypeptide reads, in one-letter code: Serine/threonine-protein kinase GD17699 (743 aa).

The interval 54–78 (NVQEDNSYNRDCDSPVSSSSEPEKE) is disordered. Doublecortin domains follow at residues 154–240 (LRIK…VEYN) and 309–392 (RIVT…AEDF). A Protein kinase domain is found at 473 to 731 (YTLGRIIGDG…SEDILDHPWT (259 aa)). Residues 479 to 487 (IGDGNFAIV) and lysine 502 contribute to the ATP site. Residue aspartate 594 is the Proton acceptor of the active site.

The protein belongs to the protein kinase superfamily. CAMK Ser/Thr protein kinase family. CaMK subfamily.

The catalysed reaction is L-seryl-[protein] + ATP = O-phospho-L-seryl-[protein] + ADP + H(+). It carries out the reaction L-threonyl-[protein] + ATP = O-phospho-L-threonyl-[protein] + ADP + H(+). This chain is Serine/threonine-protein kinase GD17699, found in Drosophila simulans (Fruit fly).